The chain runs to 294 residues: rRNA 2'-O-methyltransferase fibrillarin (294 aa).

The disordered stretch occupies residues Met1–Gly62. Positions Gly20 to Gly56 are enriched in gly residues. Residues Arg27, Arg47, and Arg61 each carry the asymmetric dimethylarginine modification. Residues Thr151–Thr152, Glu170–Phe171, Asp195–Ala196, and Asp215–Gln218 each bind S-adenosyl-L-methionine.

The protein belongs to the methyltransferase superfamily. Fibrillarin family. Component of box C/D small nucleolar ribonucleoprotein (snoRNP) particles. It is associated with the U3, U8 and U13 small nuclear RNAs. In terms of processing, by homology to other fibrillarins, some or all of the N-terminal domain arginines are modified to asymmetric dimethylarginine (DMA).

It localises to the nucleus. The protein localises to the nucleolus. The enzyme catalyses L-glutaminyl-[histone H2A] + S-adenosyl-L-methionine = N(5)-methyl-L-glutaminyl-[histone H2A] + S-adenosyl-L-homocysteine + H(+). In terms of biological role, S-adenosyl-L-methionine-dependent methyltransferase that has the ability to methylate both RNAs and proteins. Involved in pre-rRNA processing. Utilizes the methyl donor S-adenosyl-L-methionine to catalyze the site-specific 2'-hydroxyl methylation of ribose moieties in pre-ribosomal RNA. Site specificity is provided by a guide RNA that base pairs with the substrate. Methylation occurs at a characteristic distance from the sequence involved in base pairing with the guide RNA. Also acts as a protein methyltransferase by mediating methylation of 'Gln-105' of histone H2A (H2AQ105me), a modification that impairs binding of the FACT complex and is specifically present at 35S ribosomal DNA locus. The chain is rRNA 2'-O-methyltransferase fibrillarin (FIB) from Tetrahymena thermophila.